We begin with the raw amino-acid sequence, 272 residues long: Imidazole glycerol phosphate synthase subunit HisF (272 aa).

Active-site residues include D11 and D130.

This sequence belongs to the HisA/HisF family. As to quaternary structure, heterodimer of HisH and HisF.

The protein localises to the cytoplasm. The enzyme catalyses 5-[(5-phospho-1-deoxy-D-ribulos-1-ylimino)methylamino]-1-(5-phospho-beta-D-ribosyl)imidazole-4-carboxamide + L-glutamine = D-erythro-1-(imidazol-4-yl)glycerol 3-phosphate + 5-amino-1-(5-phospho-beta-D-ribosyl)imidazole-4-carboxamide + L-glutamate + H(+). Its pathway is amino-acid biosynthesis; L-histidine biosynthesis; L-histidine from 5-phospho-alpha-D-ribose 1-diphosphate: step 5/9. In terms of biological role, IGPS catalyzes the conversion of PRFAR and glutamine to IGP, AICAR and glutamate. The HisF subunit catalyzes the cyclization activity that produces IGP and AICAR from PRFAR using the ammonia provided by the HisH subunit. The chain is Imidazole glycerol phosphate synthase subunit HisF from Methanococcus maripaludis (strain C6 / ATCC BAA-1332).